The chain runs to 142 residues: Deoxyuridine 5'-triphosphate nucleotidohydrolase (142 aa).

Substrate is bound by residues 62–64, N75, and 79–81; these read RSG and TID.

This sequence belongs to the dUTPase family. Mg(2+) serves as cofactor.

The catalysed reaction is dUTP + H2O = dUMP + diphosphate + H(+). The protein operates within pyrimidine metabolism; dUMP biosynthesis; dUMP from dCTP (dUTP route): step 2/2. Its function is as follows. This enzyme is involved in nucleotide metabolism: it produces dUMP, the immediate precursor of thymidine nucleotides and it decreases the intracellular concentration of dUTP so that uracil cannot be incorporated into DNA. The sequence is that of Deoxyuridine 5'-triphosphate nucleotidohydrolase from Crocosphaera subtropica (strain ATCC 51142 / BH68) (Cyanothece sp. (strain ATCC 51142)).